The primary structure comprises 263 residues: HTH-type transcriptional repressor NanR (263 aa).

The HTH gntR-type domain maps to 30 to 98 (KKLSEMVEEE…NGERARVSRP (69 aa)). The H-T-H motif DNA-binding region spans 58 to 77 (ERELMAFFNVGRPSVREALA).

It belongs to the NanR family.

In terms of biological role, transcriptional repressor that controls expression of the genes required for the catabolism of sialic acids. In Salmonella bongori (strain ATCC 43975 / DSM 13772 / NCTC 12419), this protein is HTH-type transcriptional repressor NanR.